A 1177-amino-acid chain; its full sequence is DNA-directed RNA polymerase subunit beta' (1177 aa).

4 residues coordinate Zn(2+): cysteine 60, cysteine 62, cysteine 75, and cysteine 78. Residues aspartate 450, aspartate 452, and aspartate 454 each coordinate Mg(2+). The Zn(2+) site is built by cysteine 795, cysteine 869, cysteine 876, and cysteine 879.

The protein belongs to the RNA polymerase beta' chain family. In terms of assembly, the RNAP catalytic core consists of 2 alpha, 1 beta, 1 beta' and 1 omega subunit. When a sigma factor is associated with the core the holoenzyme is formed, which can initiate transcription. Requires Mg(2+) as cofactor. Zn(2+) serves as cofactor.

The enzyme catalyses RNA(n) + a ribonucleoside 5'-triphosphate = RNA(n+1) + diphosphate. In terms of biological role, DNA-dependent RNA polymerase catalyzes the transcription of DNA into RNA using the four ribonucleoside triphosphates as substrates. The sequence is that of DNA-directed RNA polymerase subunit beta' from Clostridium botulinum (strain Alaska E43 / Type E3).